The sequence spans 274 residues: Large ribosomal subunit protein uL2cz/uL2cy (274 aa).

Disordered regions lie at residues 1 to 21 (MAIH…VDSQ) and 225 to 254 (PVDH…PALG).

Belongs to the universal ribosomal protein uL2 family. As to quaternary structure, part of the 50S ribosomal subunit.

The protein resides in the plastid. The protein localises to the chloroplast. The polypeptide is Large ribosomal subunit protein uL2cz/uL2cy (rpl2-A) (Draba nemorosa (Woodland whitlowgrass)).